A 249-amino-acid chain; its full sequence is MAENGAAVQENQNVIRHQEVGHKSLLQSDALYQYILETSVYPREPESMKELRELTAKHPWNLMTTSADEGQFLNMLLKLINAKNTMEIGVYTGYSLLATALAIPHDGKILAMDINRENYEIGLPVIEKAGVAHKIDFREGPALPVLDQLVEDKNNHGTYDFIFVDADKDNYINYHKRIIDLVKVGGLIGYDNTLWNGSLVAPADTPMRKYVRYYRDFILELNKALAADPRIEICMLPVGDGITLGRRIS.

A substrate-binding site is contributed by K23. Residues T65, E87, G89–V90, S95, D113, and A142 each bind S-adenosyl-L-methionine. D165 serves as a coordination point for substrate. Position 165 (D165) interacts with a divalent metal cation. Residue D167 coordinates S-adenosyl-L-methionine. Positions 191 and 192 each coordinate a divalent metal cation. N196 lines the substrate pocket.

It belongs to the class I-like SAM-binding methyltransferase superfamily. Cation-dependent O-methyltransferase family. CCoAMT subfamily. Requires a divalent metal cation as cofactor. Mostly expressed in petal limbs and tubes, and, at low levels, in flower buds, stamens, pistils, stems, roots and leaves.

The protein resides in the cytoplasm. It is found in the cytosol. It catalyses the reaction (E)-caffeoyl-CoA + S-adenosyl-L-methionine = (E)-feruloyl-CoA + S-adenosyl-L-homocysteine + H(+). The enzyme catalyses (E)-5-hydroxyferuloyl-CoA + S-adenosyl-L-methionine = (E)-sinapoyl-CoA + S-adenosyl-L-homocysteine + H(+). It functions in the pathway aromatic compound metabolism; phenylpropanoid biosynthesis. Involved in the production of floral volatile phenylpropanoids in flowers of fragrant cultivars (e.g. cv. Mitchell and cv. V26) from cinnamic acid, a common precursor with the anthocyanin biosynthesis pathway involved in flower pigmentation. Methylates caffeoyl-CoA to feruloyl-CoA, also able to methylate 5-hydroxyferuloyl-CoA. The sequence is that of Caffeoyl-CoA O-methyltransferase 1 from Petunia hybrida (Petunia).